The following is a 490-amino-acid chain: N-succinylglutamate 5-semialdehyde dehydrogenase (490 aa).

224 to 229 (GSSPTG) lines the NAD(+) pocket. Residues Glu247 and Cys281 contribute to the active site.

Belongs to the aldehyde dehydrogenase family. AstD subfamily.

The catalysed reaction is N-succinyl-L-glutamate 5-semialdehyde + NAD(+) + H2O = N-succinyl-L-glutamate + NADH + 2 H(+). The protein operates within amino-acid degradation; L-arginine degradation via AST pathway; L-glutamate and succinate from L-arginine: step 4/5. Catalyzes the NAD-dependent reduction of succinylglutamate semialdehyde into succinylglutamate. In Hahella chejuensis (strain KCTC 2396), this protein is N-succinylglutamate 5-semialdehyde dehydrogenase.